Here is a 534-residue protein sequence, read N- to C-terminus: MMDDDTELRTDGNSLLKAVWLGRLRLTRLLLEGGAYINESNDKGETALMVACITKHVDQQSISKSKMVKYLLDNRADPNIQDKSGKTALIHACIRRAGGEVVSLLLENGADPSLEDRTGASALVYAINADDKDALKHLLDACKAKGKEVIIITTDKSSSGTKTTKQYLNVPPSPKVEDRQSPPLCTTPSDVELKTSGLASPPSEKDDDFFILQTGHQSGCSTSKVLNEPGSPTRKVSSLKRARLPQLKRLQSEPWGLIAPSVLAAATRQDETHGTSTDNEVIRSINDVTFPKRGPLSRTNSIDSKDPTLFPTVQEQVLKVSASTPASWKAAYEKGQAPHPRLARRGTLPLDQEKSGMCPPGPSTLKDPASLKLLENDLYDLDIQPVGDPPNSMSLESGKGPLDRKKLNSSHLSLFHGSRESLEVVPSTSPTSVRRRPPHLLERRGSGTLLLDRIAHTRPGFLPPLNVNLNPPIPDIRASSKPASPLASGLKSMAPVAPNSPKRVDLRSKKKLLRRHSMQIEQMKQLSDFEEIMA.

ANK repeat units lie at residues 10–39, 43–80, 84–114, and 118–147; these read TDGN…YINE, KGET…DPNI, SGKT…DPSL, and TGAS…AKGK. The tract at residues 159–205 is disordered; it reads SGTKTTKQYLNVPPSPKVEDRQSPPLCTTPSDVELKTSGLASPPSEK. Residue S301 is modified to Phosphoserine. 2 disordered regions span residues 332-368 and 384-403; these read YEKG…LKDP and QPVG…GPLD. S446 bears the Phosphoserine mark. The tract at residues 480-503 is disordered; it reads SKPASPLASGLKSMAPVAPNSPKR.

This sequence belongs to the ANKRD34 family.

This Mus musculus (Mouse) protein is Ankyrin repeat domain-containing protein 34C (Ankrd34c).